A 449-amino-acid polypeptide reads, in one-letter code: Bifunctional protein GlmU (449 aa).

The segment at 1-226 (MNNIHAIILA…KFEVLGVNDK (226 aa)) is pyrophosphorylase. UDP-N-acetyl-alpha-D-glucosamine contacts are provided by residues 9 to 12 (LAAG), lysine 23, glutamine 73, 78 to 79 (GT), 100 to 102 (YGD), glycine 137, glutamate 151, asparagine 166, and asparagine 224. Mg(2+) is bound at residue aspartate 102. Asparagine 224 contributes to the Mg(2+) binding site. The segment at 227 to 247 (VQLAELERLFQKDQAIQFMKQ) is linker. The interval 248–449 (GLGLKDPTRF…QKNLKYRSKK (202 aa)) is N-acetyltransferase. Positions 330 and 348 each coordinate UDP-N-acetyl-alpha-D-glucosamine. Histidine 360 serves as the catalytic Proton acceptor. UDP-N-acetyl-alpha-D-glucosamine is bound by residues tyrosine 363 and asparagine 374. Residues alanine 377, 383-384 (NY), serine 402, alanine 420, and arginine 437 contribute to the acetyl-CoA site.

The protein in the N-terminal section; belongs to the N-acetylglucosamine-1-phosphate uridyltransferase family. It in the C-terminal section; belongs to the transferase hexapeptide repeat family. Homotrimer. The cofactor is Mg(2+).

It localises to the cytoplasm. The catalysed reaction is alpha-D-glucosamine 1-phosphate + acetyl-CoA = N-acetyl-alpha-D-glucosamine 1-phosphate + CoA + H(+). The enzyme catalyses N-acetyl-alpha-D-glucosamine 1-phosphate + UTP + H(+) = UDP-N-acetyl-alpha-D-glucosamine + diphosphate. The protein operates within nucleotide-sugar biosynthesis; UDP-N-acetyl-alpha-D-glucosamine biosynthesis; N-acetyl-alpha-D-glucosamine 1-phosphate from alpha-D-glucosamine 6-phosphate (route II): step 2/2. Its pathway is nucleotide-sugar biosynthesis; UDP-N-acetyl-alpha-D-glucosamine biosynthesis; UDP-N-acetyl-alpha-D-glucosamine from N-acetyl-alpha-D-glucosamine 1-phosphate: step 1/1. It participates in bacterial outer membrane biogenesis; LPS lipid A biosynthesis. Catalyzes the last two sequential reactions in the de novo biosynthetic pathway for UDP-N-acetylglucosamine (UDP-GlcNAc). The C-terminal domain catalyzes the transfer of acetyl group from acetyl coenzyme A to glucosamine-1-phosphate (GlcN-1-P) to produce N-acetylglucosamine-1-phosphate (GlcNAc-1-P), which is converted into UDP-GlcNAc by the transfer of uridine 5-monophosphate (from uridine 5-triphosphate), a reaction catalyzed by the N-terminal domain. This is Bifunctional protein GlmU from Vesicomyosocius okutanii subsp. Calyptogena okutanii (strain HA).